Reading from the N-terminus, the 84-residue chain is Small ribosomal subunit protein bS16 (84 aa).

The protein belongs to the bacterial ribosomal protein bS16 family.

The polypeptide is Small ribosomal subunit protein bS16 (Dichelobacter nodosus (strain VCS1703A)).